We begin with the raw amino-acid sequence, 358 residues long: Aminomethyltransferase (358 aa).

It belongs to the GcvT family. The glycine cleavage system is composed of four proteins: P, T, L and H.

It carries out the reaction N(6)-[(R)-S(8)-aminomethyldihydrolipoyl]-L-lysyl-[protein] + (6S)-5,6,7,8-tetrahydrofolate = N(6)-[(R)-dihydrolipoyl]-L-lysyl-[protein] + (6R)-5,10-methylene-5,6,7,8-tetrahydrofolate + NH4(+). Functionally, the glycine cleavage system catalyzes the degradation of glycine. In Francisella tularensis subsp. holarctica (strain FTNF002-00 / FTA), this protein is Aminomethyltransferase.